We begin with the raw amino-acid sequence, 101 residues long: Small ribosomal subunit protein bS18c (101 aa).

It belongs to the bacterial ribosomal protein bS18 family. In terms of assembly, component of the chloroplast small ribosomal subunit (SSU). Mature 70S chloroplast ribosomes of higher plants consist of a small (30S) and a large (50S) subunit. The 30S small subunit contains 1 molecule of ribosomal RNA (16S rRNA) and 24 different proteins. The 50S large subunit contains 3 rRNA molecules (23S, 5S and 4.5S rRNA) and 33 different proteins.

It is found in the plastid. It localises to the chloroplast. Functionally, component of the chloroplast ribosome (chloro-ribosome), a dedicated translation machinery responsible for the synthesis of chloroplast genome-encoded proteins, including proteins of the transcription and translation machinery and components of the photosynthetic apparatus. This chain is Small ribosomal subunit protein bS18c (RPS18), found in Spinacia oleracea (Spinach).